The primary structure comprises 493 residues: Trichothecene 8-O-acetyltransferase (493 aa).

The segment covering 180-191 has biased composition (polar residues); that stretch reads QDQNENEVQQPK. The segment at 180-199 is disordered; sequence QDQNENEVQQPKNLPDPDEP.

It participates in sesquiterpene biosynthesis; trichothecene biosynthesis. Trichothecene 8-O-acetyltransferase; part of 2-gene cluster involved in trichothecene C-8 modification that mediates the biosynthesis of T2-toxin. The biosynthesis of trichothecenes begins with the cyclization of farnesyl diphosphate to trichodiene and is catalyzed by the trichodiene synthase TRI5. Trichodiene undergoes a series of oxygenations catalyzed by the cytochrome P450 monooxygenase TRI4. TRI4 controls the addition of four oxygens at C-2, C-3, C-11, and the C-12, C-13-epoxide to form the intermediate isotrichotriol. Isotrichotriol then undergoes a non-enzymatic isomerization and cyclization to form isotrichodermol. During this process, the oxygen at the C-2 position becomes the pyran ring oxygen and the hydroxyl group at C-11 is lost. More complex type A trichothecenes are built by modifying isotrichodermol through a series of paired hydroxylation and acetylation or acylation steps. Isotrichodermol is converted to isotrichodermin by the acetyltransferase TRI101. TRI101 encodes a C-3 transacetylase that acts as a self-protection or resistance factor during biosynthesis and that the presence of a free C-3 hydroxyl group is a key component of Fusarium trichothecene phytotoxicity. A second hydroxyl group is added to C-15 by the trichothecene C-15 hydroxylase TRI11, producing 15-decalonectrin, which is then acetylated by TRI3, producing calonectrin. A third hydroxyl group is added at C-4 by the cytochrome P450 monooxygenase TRI13, converting calonectrin to 3,15-diacetoxyspirpenol, which is subsequently acetylated bythe acetyltransferase TRI7. A fourth hydroxyl group is added to C-8 by the cytochrome P450 monooxygenase TRI1, followed by the addition of an isovaleryl moiety by TRI16. Finally, the acetyl group is removed from the C-3 position by the trichothecene C-3 esterase TRI8 to produce T-2 toxin. This is Trichothecene 8-O-acetyltransferase from Fusarium sporotrichioides.